Consider the following 260-residue polypeptide: Ribonuclease HII (260 aa).

Positions 75-260 (ELIAGVDEVG…FEPIKSIIKK (186 aa)) constitute an RNase H type-2 domain. The a divalent metal cation site is built by D81, E82, and D173.

Belongs to the RNase HII family. Mn(2+) serves as cofactor. Requires Mg(2+) as cofactor.

Its subcellular location is the cytoplasm. It carries out the reaction Endonucleolytic cleavage to 5'-phosphomonoester.. Functionally, endonuclease that specifically degrades the RNA of RNA-DNA hybrids. This Streptococcus thermophilus (strain CNRZ 1066) protein is Ribonuclease HII.